The sequence spans 142 residues: Large ribosomal subunit protein uL11 (142 aa).

The protein belongs to the universal ribosomal protein uL11 family. As to quaternary structure, part of the ribosomal stalk of the 50S ribosomal subunit. Interacts with L10 and the large rRNA to form the base of the stalk. L10 forms an elongated spine to which L12 dimers bind in a sequential fashion forming a multimeric L10(L12)X complex. One or more lysine residues are methylated.

Forms part of the ribosomal stalk which helps the ribosome interact with GTP-bound translation factors. The chain is Large ribosomal subunit protein uL11 from Buchnera aphidicola subsp. Schizaphis graminum (strain Sg).